We begin with the raw amino-acid sequence, 180 residues long: ATP-dependent protease subunit HslV (180 aa).

Residue Thr7 is part of the active site. 3 residues coordinate Na(+): Ala162, Cys165, and Thr168.

It belongs to the peptidase T1B family. HslV subfamily. A double ring-shaped homohexamer of HslV is capped on each side by a ring-shaped HslU homohexamer. The assembly of the HslU/HslV complex is dependent on binding of ATP.

The protein resides in the cytoplasm. The catalysed reaction is ATP-dependent cleavage of peptide bonds with broad specificity.. Allosterically activated by HslU binding. In terms of biological role, protease subunit of a proteasome-like degradation complex believed to be a general protein degrading machinery. The sequence is that of ATP-dependent protease subunit HslV from Dichelobacter nodosus (strain VCS1703A).